The sequence spans 324 residues: Sperm acrosome membrane-associated protein 6 (324 aa).

The signal sequence occupies residues 1-26 (MALLALASAVPSALLALAVFRVPAWA). A CXXC motif motif is present at residues 27–30 (CLLC). 6 disulfides stabilise this stretch: cysteine 27/cysteine 139, cysteine 30/cysteine 142, cysteine 41/cysteine 55, cysteine 124/cysteine 147, cysteine 128/cysteine 153, and cysteine 170/cysteine 226. The Extracellular segment spans residues 27-295 (CLLCFTTYSE…RPEALTPSNL (269 aa)). Residues 139–142 (CSGC) carry the CXXC motif motif. The Ig-like domain occupies 150 to 236 (PLDCPVQDVT…VIKQDQRPLA (87 aa)). The N-linked (GlcNAc...) asparagine glycan is linked to asparagine 243. Residues 296-316 (FLLAVLGALASASATVLAWMF) form a helical membrane-spanning segment. At 317-324 (FRWYCSGN) the chain is on the cytoplasmic side.

The protein belongs to the SPACA6 family. As to quaternary structure, forms a complex with IZUMO1 and TMEM81 on spermatocyte cell membrane required for fertilization. Detected at the sperm head, equatorial region, neck and midpiece (at protein level). Expressed in testis.

It is found in the cytoplasmic vesicle. It localises to the secretory vesicle. The protein localises to the acrosome membrane. Sperm protein required for fusion of sperm with the egg membrane during fertilization. May regulate the expression of sperm surface protein DCST2. The polypeptide is Sperm acrosome membrane-associated protein 6 (Homo sapiens (Human)).